A 482-amino-acid chain; its full sequence is Lipoamide acyltransferase component of branched-chain alpha-keto acid dehydrogenase complex, mitochondrial (482 aa).

The transit peptide at 1–61 (MAAALVLRTW…QWLKTTAALQ (61 aa)) directs the protein to the mitochondrion. Positions 64 to 139 (IVQFKLSDIG…YVGKPLVDIE (76 aa)) constitute a Lipoyl-binding domain. Lys105 carries the post-translational modification N6-lipoyllysine. Lys133 is subject to N6-succinyllysine. The tract at residues 145 to 160 (DSEEDVVETPAVSHDE) is critical for association with PPM1K. Residues 146–171 (SEEDVVETPAVSHDEHTHQEIKGQKT) form a disordered region. The span at 157–168 (SHDEHTHQEIKG) shows a compositional bias: basic and acidic residues. The 38-residue stretch at 172–209 (LATPAVRRLAMENNIKLSEVIGSGKDGRILKEDILNYL) folds into the Peripheral subunit-binding (PSBD) domain. An N6-acetyllysine; alternate modification is found at Lys196. Lys196 carries the post-translational modification N6-succinyllysine; alternate. Lys202 bears the N6-acetyllysine mark. Positions 218–230 (PPSPKAEIMPPPP) are enriched in pro residues. Residues 218-238 (PPSPKAEIMPPPPKPKDRTIP) are disordered. A Phosphoserine modification is found at Ser220. N6-acetyllysine is present on residues Lys243 and Lys250. At Lys261 the chain carries N6-succinyllysine. At Lys289 the chain carries N6-acetyllysine; alternate. Lys289 bears the N6-succinyllysine; alternate mark. Arg291 provides a ligand contact to CoA. Residues Lys295 and Lys304 each carry the N6-acetyllysine modification. Residues Ser306, Asp349, Gln378, Ser399, Asn400, Ser403, Gly424, and Ile426 each contribute to the CoA site. N6-acetyllysine is present on Lys435. At Lys440 the chain carries N6-acetyllysine; alternate. An N6-succinyllysine; alternate modification is found at Lys440. Catalysis depends on residues His452 and Asp456.

The protein belongs to the 2-oxoacid dehydrogenase family. In terms of assembly, forms a 24-polypeptide structural core with octahedral symmetry that represents the E2 component of the branched-chain alpha-ketoacid dehydrogenase (BCKDH) complex. The BCKDH complex is composed of three major building blocks E1, E2 and E3. It is organized around E2, a 24-meric cubic core composed of DBT, to which are associated 6 to 12 copies of E1, and approximately 6 copies of the dehydrogenase E3, a DLD dimer. Interacts with PPM1K with a 24:1 stoichiometry; the N-terminal region (residues 49-61) of PPM1K and C-terminal linker of the lipoyl domain of DBT/E2 (residues 145-160) are critical for this interaction whereas the lipoyl prosthetic group is dispensable. This interaction requires colocalization in mitochondria. PPM1K competes with BCKDK for binding to DBT; this interaction is modulated by branched-chain alpha-keto acids (BCKAs). At steady state, BCKDH holoenzyme preferentially binds BCKDK and BCKDHA is phosphorylated. In response to high levels of BCKAs, BCKDK is replaced by PPM1K leading to BCKDHA dephosphorylation. The cofactor is (R)-lipoate. In terms of tissue distribution, expressed in kidney (at protein level).

The protein localises to the mitochondrion matrix. It catalyses the reaction N(6)-[(R)-dihydrolipoyl]-L-lysyl-[protein] + 2-methylpropanoyl-CoA = N(6)-[(R)-S(8)-2-methylpropanoyldihydrolipoyl]-L-lysyl-[protein] + CoA. Its function is as follows. The branched-chain alpha-keto dehydrogenase complex catalyzes the overall conversion of alpha-keto acids to acyl-CoA and CO(2). It contains multiple copies of three enzymatic components: branched-chain alpha-keto acid decarboxylase (E1), lipoamide acyltransferase (E2) and lipoamide dehydrogenase (E3). Within this complex, the catalytic function of this enzyme is to accept, and to transfer to coenzyme A, acyl groups that are generated by the branched-chain alpha-keto acid decarboxylase component. The protein is Lipoamide acyltransferase component of branched-chain alpha-keto acid dehydrogenase complex, mitochondrial (DBT) of Bos taurus (Bovine).